A 156-amino-acid polypeptide reads, in one-letter code: Small ribosomal subunit protein uS7 (156 aa).

The protein belongs to the universal ribosomal protein uS7 family. Part of the 30S ribosomal subunit. Contacts proteins S9 and S11.

In terms of biological role, one of the primary rRNA binding proteins, it binds directly to 16S rRNA where it nucleates assembly of the head domain of the 30S subunit. Is located at the subunit interface close to the decoding center, probably blocks exit of the E-site tRNA. This Frankia casuarinae (strain DSM 45818 / CECT 9043 / HFP020203 / CcI3) protein is Small ribosomal subunit protein uS7.